A 147-amino-acid polypeptide reads, in one-letter code: uncharacterized protein (147 aa).

Belongs to the limonene-1,2-epoxide hydrolase family.

This is an uncharacterized protein from Bacillus subtilis (strain 168).